A 309-amino-acid polypeptide reads, in one-letter code: Probable manganese-dependent inorganic pyrophosphatase (309 aa).

Residues His9, Asp13, Asp15, Asp75, His97, and Asp149 each contribute to the Mn(2+) site.

The protein belongs to the PPase class C family. Requires Mn(2+) as cofactor.

The protein resides in the cytoplasm. It carries out the reaction diphosphate + H2O = 2 phosphate + H(+). The chain is Probable manganese-dependent inorganic pyrophosphatase from Bacillus mycoides (strain KBAB4) (Bacillus weihenstephanensis).